Consider the following 216-residue polypeptide: tRNA (guanine-N(7)-)-methyltransferase (216 aa).

Residues Glu44, Glu69, Asn96, and Asp118 each contribute to the S-adenosyl-L-methionine site. The active site involves Asp118. Residue Lys122 coordinates substrate. The interval 124–129 (RHEKRR) is interaction with RNA. Substrate contacts are provided by residues Asp154 and 191 to 194 (TEYE).

The protein belongs to the class I-like SAM-binding methyltransferase superfamily. TrmB family.

The enzyme catalyses guanosine(46) in tRNA + S-adenosyl-L-methionine = N(7)-methylguanosine(46) in tRNA + S-adenosyl-L-homocysteine. It participates in tRNA modification; N(7)-methylguanine-tRNA biosynthesis. Catalyzes the formation of N(7)-methylguanine at position 46 (m7G46) in tRNA. The polypeptide is tRNA (guanine-N(7)-)-methyltransferase (Geobacillus thermodenitrificans (strain NG80-2)).